The following is a 48-amino-acid chain: EACAGAYKSCDKVKCCHDRRCRCNIAMDNCVCKLFYCELFGTCDRLKP.

4 cysteine pairs are disulfide-bonded: Cys3–Cys16, Cys10–Cys21, Cys15–Cys32, and Cys23–Cys30.

The protein belongs to the neurotoxin 02 (plectoxin) family. In terms of tissue distribution, expressed by the venom gland.

It is found in the secreted. Its function is as follows. The toxin blocks voltage-gated calcium channels in rat cerebellar granule cells (IC(50)=200 nM). This chain is Omega-agatoxin-Aa5a, found in Agelenopsis aperta (North American funnel-web spider).